The chain runs to 203 residues: Sarcosine oxidase subunit gamma (203 aa).

The protein belongs to the SoxG family. In terms of assembly, heterotetramer composed of subunits alpha (SoxA), beta (SoxB), gamma (SoxG) and delta (SoxD).

The protein localises to the cytoplasm. It carries out the reaction sarcosine + (6S)-5,6,7,8-tetrahydrofolate + O2 = (6R)-5,10-methylene-5,6,7,8-tetrahydrofolate + glycine + H2O2. The enzyme catalyses sarcosine + O2 + H2O = formaldehyde + glycine + H2O2. In terms of biological role, in the presence of tetrahydrofolate, catalyzes the oxidative demethylation of sarcosine to yield glycine, 5,10-methylenetetrahydrofolate and hydrogen peroxide. In the absence of tetrahydrofolate, catalyzes the oxidative demethylation of sarcosine to yield glycine, formaldehyde and hydrogen peroxide. In Arthrobacter sp, this protein is Sarcosine oxidase subunit gamma (soxG).